Here is a 409-residue protein sequence, read N- to C-terminus: Serine protease inhibitor 2 (409 aa).

The first 21 residues, 1-21, serve as a signal peptide directing secretion; sequence MNKLNFVILCLAALLVFDATA. N-linked (GlcNAc...) asparagine glycans are attached at residues N294 and N324. A Hinge region; required for binding to peptidase motif is present at residues 356–360; sequence LGSEA.

The protein belongs to the serpin family. As to quaternary structure, forms a covalent heterodimer with protease CLIPB9; the interaction inhibits CLIPB9 protease activity. Forms a covalent heterodimer with protease CLIPB10; the interaction inhibits CLIPB10 catalytic activity. Interacts with CLIPB4 in the hemolymph of immune-challenged female mosquitoes; the interaction results in CLIPB4 inhibition. In terms of processing, protease CLIPB9 binds to SRPN2 via the hinge region resulting in the cleavage of the reactive bond. This leads to a conformational change in SRPN2 which traps CLIPB9 and distorts its active site, resulting in CLIPB9 inactivation.

It is found in the secreted. Its function is as follows. Serine protease inhibitor that functions in the melanization-mediated immune response. By preventing the activation of phenoloxidases through the inhibiting of serine proteases CLIPB9, CLIPB10 and CLIPB4, negatively regulates melanization in the hemolymph. By preventing melanization, has a detrimental role during P.berghei parasite mediated-infection and invasion of the mosquito midgut. This is Serine protease inhibitor 2 from Anopheles gambiae (African malaria mosquito).